A 383-amino-acid polypeptide reads, in one-letter code: MVQIFKFLLKSNKSPARAHFRPSFLDTLRLAVRGGHGGNGLPKYGGVGGQGGCVYFVAKEGLTLRKMAQGLKDRRVAASSGEDSSKVSIFGKRGVDTRIEVPVGVQVYDEQQKLLADLNENDAKCIVAGGGTGGCTGNNFLGRPGENRIVNLDLKLIADVGLVGFPNAGKSTLLKAVSNAKPKIAAYPFTTIRPQIGTIEYGDLRSISLADLPGLIEGAHANFGMGHKFLKHIERTRLLLFMVDIFGFQLSPRHPHRDCLANIYSLNKELELYDPSLLEKPCVLLLNKMDKEGAHDILTKVKPIIDDLSSGLADCPEEVRPKRVLKFESIVPISAINSTRVTQVKSQLRRTLVRLAEKQFVSDGEQIKEQLQQRVGLVGPRIT.

Residues 22–157 (PSFLDTLRLA…RIVNLDLKLI (136 aa)) enclose the Obg domain. Positions 158 to 353 (ADVGLVGFPN…VKSQLRRTLV (196 aa)) constitute an OBG-type G domain. GTP is bound by residues 164-171 (GFPNAGKS), 211-215 (DLPGL), and 287-290 (NKMD).

Belongs to the TRAFAC class OBG-HflX-like GTPase superfamily. OBG GTPase family.

The protein localises to the nucleus. It is found in the nucleolus. May be involved in the ribosome maturation process. This chain is GTP-binding protein 10 homolog, found in Drosophila pseudoobscura pseudoobscura (Fruit fly).